The primary structure comprises 533 residues: NAD(P)H-quinone oxidoreductase chain 4 (533 aa).

The next 15 membrane-spanning stretches (helical) occupy residues 5–25, 36–56, 70–90, 91–111, 115–135, 137–157, 169–189, 210–230, 244–264, 278–298, 315–335, 336–356, 377–397, 418–438, and 465–485; these read VPWL…VPLV, WYAL…YLTG, VSWL…LSMP, LILL…PVSF, LFYF…AVQD, LLFF…LAIW, FILY…AMGF, GFQL…LPIV, TAPV…YALL, FAPL…LTSF, MGFV…GAML, QMIS…ATYD, FALW…SGFV, VVIC…LLSM, and VYII…PKLM.

This sequence belongs to the complex I subunit 4 family.

It localises to the cellular thylakoid membrane. It carries out the reaction a plastoquinone + NADH + (n+1) H(+)(in) = a plastoquinol + NAD(+) + n H(+)(out). The catalysed reaction is a plastoquinone + NADPH + (n+1) H(+)(in) = a plastoquinol + NADP(+) + n H(+)(out). Its function is as follows. NDH-1 shuttles electrons from NAD(P)H, via FMN and iron-sulfur (Fe-S) centers, to quinones in the respiratory chain. The immediate electron acceptor for the enzyme in this species is believed to be plastoquinone. Couples the redox reaction to proton translocation (for every two electrons transferred, four hydrogen ions are translocated across the cytoplasmic membrane), and thus conserves the redox energy in a proton gradient. This is NAD(P)H-quinone oxidoreductase chain 4 from Synechococcus sp. (strain CC9605).